The chain runs to 436 residues: tRNA-2-methylthio-N(6)-dimethylallyladenosine synthase (436 aa).

One can recognise an MTTase N-terminal domain in the interval 5–121 (RKLFIKTYGC…LPDMLERTEG (117 aa)). Residues Cys14, Cys50, Cys84, Cys158, Cys162, and Cys165 each coordinate [4Fe-4S] cluster. The Radical SAM core domain maps to 144 to 374 (ATRGPAAFLT…TEQQRAAQMA (231 aa)). The TRAM domain occupies 373–435 (MAMVGREVGV…PNSLAGERLG (63 aa)).

It belongs to the methylthiotransferase family. MiaB subfamily. In terms of assembly, monomer. It depends on [4Fe-4S] cluster as a cofactor.

Its subcellular location is the cytoplasm. It carries out the reaction N(6)-dimethylallyladenosine(37) in tRNA + (sulfur carrier)-SH + AH2 + 2 S-adenosyl-L-methionine = 2-methylsulfanyl-N(6)-dimethylallyladenosine(37) in tRNA + (sulfur carrier)-H + 5'-deoxyadenosine + L-methionine + A + S-adenosyl-L-homocysteine + 2 H(+). Functionally, catalyzes the methylthiolation of N6-(dimethylallyl)adenosine (i(6)A), leading to the formation of 2-methylthio-N6-(dimethylallyl)adenosine (ms(2)i(6)A) at position 37 in tRNAs that read codons beginning with uridine. The polypeptide is tRNA-2-methylthio-N(6)-dimethylallyladenosine synthase (Cereibacter sphaeroides (strain ATCC 17023 / DSM 158 / JCM 6121 / CCUG 31486 / LMG 2827 / NBRC 12203 / NCIMB 8253 / ATH 2.4.1.) (Rhodobacter sphaeroides)).